We begin with the raw amino-acid sequence, 211 residues long: Pyridoxine/pyridoxamine 5'-phosphate oxidase (211 aa).

Substrate contacts are provided by residues 7–10 (RREY) and K65. FMN is bound by residues 60–65 (RIVLLK), 75–76 (YT), R81, K82, and Q104. Y122, R126, and S130 together coordinate substrate. Residues 139 to 140 (QS) and W184 contribute to the FMN site. 190–192 (RLH) serves as a coordination point for substrate. R194 serves as a coordination point for FMN.

This sequence belongs to the pyridoxamine 5'-phosphate oxidase family. As to quaternary structure, homodimer. FMN is required as a cofactor.

It carries out the reaction pyridoxamine 5'-phosphate + O2 + H2O = pyridoxal 5'-phosphate + H2O2 + NH4(+). The catalysed reaction is pyridoxine 5'-phosphate + O2 = pyridoxal 5'-phosphate + H2O2. Its pathway is cofactor metabolism; pyridoxal 5'-phosphate salvage; pyridoxal 5'-phosphate from pyridoxamine 5'-phosphate: step 1/1. It functions in the pathway cofactor metabolism; pyridoxal 5'-phosphate salvage; pyridoxal 5'-phosphate from pyridoxine 5'-phosphate: step 1/1. Its function is as follows. Catalyzes the oxidation of either pyridoxine 5'-phosphate (PNP) or pyridoxamine 5'-phosphate (PMP) into pyridoxal 5'-phosphate (PLP). The chain is Pyridoxine/pyridoxamine 5'-phosphate oxidase from Photobacterium profundum (strain SS9).